The following is a 739-amino-acid chain: Thiamine biosynthesis multifunctional protein ThiED (739 aa).

Residues 1–210 (MTDFSLYLVT…PSPAEAAREL (210 aa)) are thiamine-phosphate synthase. Residues 37–41 (QLRDK) and asparagine 69 contribute to the 4-amino-2-methyl-5-(diphosphooxymethyl)pyrimidine site. Mg(2+) contacts are provided by aspartate 70 and aspartate 88. 4-amino-2-methyl-5-(diphosphooxymethyl)pyrimidine is bound at residue threonine 107. 140–142 (TDT) contacts 2-[(2R,5Z)-2-carboxy-4-methylthiazol-5(2H)-ylidene]ethyl phosphate. A 4-amino-2-methyl-5-(diphosphooxymethyl)pyrimidine-binding site is contributed by lysine 143. Residues glycine 174 and 194–195 (VS) contribute to the 2-[(2R,5Z)-2-carboxy-4-methylthiazol-5(2H)-ylidene]ethyl phosphate site. The tract at residues 226–481 (LTIAGTDPTG…GSGSGPVDHF (256 aa)) is hydroxymethylpyrimidine/phosphomethylpyrimidine kinase. Glutamine 263 serves as a coordination point for 4-amino-5-hydroxymethyl-2-methylpyrimidine. The segment at 527–739 (YTRALWEATG…FDQATRQGWN (213 aa)) is thiaminase-2.

This sequence in the N-terminal section; belongs to the thiamine-phosphate synthase family. It in the central section; belongs to the ThiD family. The protein in the C-terminal section; belongs to the thiaminase-2 family. Requires Mg(2+) as cofactor.

The enzyme catalyses 2-[(2R,5Z)-2-carboxy-4-methylthiazol-5(2H)-ylidene]ethyl phosphate + 4-amino-2-methyl-5-(diphosphooxymethyl)pyrimidine + 2 H(+) = thiamine phosphate + CO2 + diphosphate. The catalysed reaction is 2-(2-carboxy-4-methylthiazol-5-yl)ethyl phosphate + 4-amino-2-methyl-5-(diphosphooxymethyl)pyrimidine + 2 H(+) = thiamine phosphate + CO2 + diphosphate. It carries out the reaction 4-methyl-5-(2-phosphooxyethyl)-thiazole + 4-amino-2-methyl-5-(diphosphooxymethyl)pyrimidine + H(+) = thiamine phosphate + diphosphate. It catalyses the reaction 4-amino-5-hydroxymethyl-2-methylpyrimidine + ATP = 4-amino-2-methyl-5-(phosphooxymethyl)pyrimidine + ADP + H(+). The enzyme catalyses 4-amino-2-methyl-5-(phosphooxymethyl)pyrimidine + ATP = 4-amino-2-methyl-5-(diphosphooxymethyl)pyrimidine + ADP. The protein operates within cofactor biosynthesis; thiamine diphosphate biosynthesis; 4-amino-2-methyl-5-diphosphomethylpyrimidine from 5-amino-1-(5-phospho-D-ribosyl)imidazole: step 3/3. Its pathway is cofactor biosynthesis; thiamine diphosphate biosynthesis; thiamine phosphate from 4-amino-2-methyl-5-diphosphomethylpyrimidine and 4-methyl-5-(2-phosphoethyl)-thiazole: step 1/1. Its function is as follows. Condenses 4-methyl-5-(beta-hydroxyethyl)thiazole monophosphate (THZ-P) and 2-methyl-4-amino-5-hydroxymethyl pyrimidine pyrophosphate (HMP-PP) to form thiamine monophosphate (TMP). In terms of biological role, catalyzes the phosphorylation of hydroxymethylpyrimidine phosphate (HMP-P) to HMP-PP, and of HMP to HMP-P. The chain is Thiamine biosynthesis multifunctional protein ThiED (thiED) from Corynebacterium efficiens (strain DSM 44549 / YS-314 / AJ 12310 / JCM 11189 / NBRC 100395).